The primary structure comprises 738 residues: Elongation factor G, mitochondrial (738 aa).

The segment at 1 to 20 (MCIGPAPTPETEEELPPSPQ) is disordered. One can recognise a tr-type G domain in the interval 32-320 (RFQRNIGVSA…GVCAYLPNPA (289 aa)). Residues 41–48 (AHIDSGKT), 118–122 (DTPGH), and 172–175 (NKMD) each bind GTP.

This sequence belongs to the TRAFAC class translation factor GTPase superfamily. Classic translation factor GTPase family. EF-G/EF-2 subfamily.

The protein localises to the mitochondrion. Its pathway is protein biosynthesis; polypeptide chain elongation. In terms of biological role, mitochondrial GTPase that catalyzes the GTP-dependent ribosomal translocation step during translation elongation. During this step, the ribosome changes from the pre-translocational (PRE) to the post-translocational (POST) state as the newly formed A-site-bound peptidyl-tRNA and P-site-bound deacylated tRNA move to the P and E sites, respectively. Catalyzes the coordinated movement of the two tRNA molecules, the mRNA and conformational changes in the ribosome. The sequence is that of Elongation factor G, mitochondrial from Laccaria bicolor (strain S238N-H82 / ATCC MYA-4686) (Bicoloured deceiver).